The chain runs to 374 residues: Queuine tRNA-ribosyltransferase (374 aa).

The Proton acceptor role is filled by D89. Residues 89 to 93 (DSGGF), D143, Q187, and G214 each bind substrate. An RNA binding region spans residues 245–251 (GVGKPED). The Nucleophile role is filled by D264. Residues 269–273 (TRNAR) are RNA binding; important for wobble base 34 recognition. Zn(2+) is bound by residues C302, C304, C307, and H333.

It belongs to the queuine tRNA-ribosyltransferase family. In terms of assembly, homodimer. Within each dimer, one monomer is responsible for RNA recognition and catalysis, while the other monomer binds to the replacement base PreQ1. It depends on Zn(2+) as a cofactor.

The enzyme catalyses 7-aminomethyl-7-carbaguanine + guanosine(34) in tRNA = 7-aminomethyl-7-carbaguanosine(34) in tRNA + guanine. The protein operates within tRNA modification; tRNA-queuosine biosynthesis. Functionally, catalyzes the base-exchange of a guanine (G) residue with the queuine precursor 7-aminomethyl-7-deazaguanine (PreQ1) at position 34 (anticodon wobble position) in tRNAs with GU(N) anticodons (tRNA-Asp, -Asn, -His and -Tyr). Catalysis occurs through a double-displacement mechanism. The nucleophile active site attacks the C1' of nucleotide 34 to detach the guanine base from the RNA, forming a covalent enzyme-RNA intermediate. The proton acceptor active site deprotonates the incoming PreQ1, allowing a nucleophilic attack on the C1' of the ribose to form the product. After dissociation, two additional enzymatic reactions on the tRNA convert PreQ1 to queuine (Q), resulting in the hypermodified nucleoside queuosine (7-(((4,5-cis-dihydroxy-2-cyclopenten-1-yl)amino)methyl)-7-deazaguanosine). This Shewanella sp. (strain MR-4) protein is Queuine tRNA-ribosyltransferase.